The following is a 448-amino-acid chain: Trk system potassium uptake protein TrkA homolog 1 (448 aa).

The region spanning 1 to 124 is the RCK N-terminal 1 domain; the sequence is MKAVIIGAGE…RAQVGVDLMI (124 aa). NAD(+) contacts are provided by residues 7–11, D29, 70–71, and R101; these read GAGEV and TG. The region spanning 144–225 is the RCK C-terminal 1 domain; sequence IDAEMFAEGK…MEDLESVFGS (82 aa). The RCK N-terminal 2 domain occupies 230–348; sequence RTRILLIGCG…FEMVGIDMAV (119 aa). Residue 232–262 coordinates NAD(+); sequence RILLIGCGIVGMYLAKLIDKEENADLRIIEH. In terms of domain architecture, RCK C-terminal 2 spans 368-448; that stretch reads QTLTTIEGER…AASEVEKYFK (81 aa).

Its function is as follows. Part of a potassium transport system. This chain is Trk system potassium uptake protein TrkA homolog 1 (trkA1), found in Methanosarcina mazei (strain ATCC BAA-159 / DSM 3647 / Goe1 / Go1 / JCM 11833 / OCM 88) (Methanosarcina frisia).